A 481-amino-acid chain; its full sequence is Solute carrier family 46 member 2 (481 aa).

Residues 1 to 37 (MGPEAAGPGRGAAPRLQVRTWIEPVVAATQVASSLYE) are Cytoplasmic-facing. A helical transmembrane segment spans residues 38–58 (AGLLLVVKASFGAGAGAGAGA). Residues 59-83 (ASNHSAGPPRGAPEDQQQRAISNFY) are Extracellular-facing. N-linked (GlcNAc...) asparagine glycosylation occurs at asparagine 61. The helical transmembrane segment at 84–104 (IVYNLVVGLTPLLSAYALGWL) threads the bilayer. Residues 105–113 (SDRRHRKVA) are Cytoplasmic-facing. The chain crosses the membrane as a helical span at residues 114 to 134 (ICVALLGFLLSRVGLLLKVLL). Residues 135 to 143 (DWPVEVLYG) are Extracellular-facing. The helical transmembrane segment at 144–164 (AAALNGLCGGFSAFWAGVMAL) threads the bilayer. At 165–179 (GSLGSSEGRRSVRLV) the chain is on the cytoplasmic side. Residues 180–200 (LIDLILGLAGFCGSMASGHLF) traverse the membrane as a helical segment. The Extracellular portion of the chain corresponds to 201–210 (KQVAGHSGQG). Residues 211–231 (LVLTACSVSCATFALLYSLLV) traverse the membrane as a helical segment. The Cytoplasmic segment spans residues 232 to 286 (LKVPEAAAGSGQALSAGDSVAGTVGTYRTLDPDHSDKQSVQGLHPPSPGKAKPRR). Residues 263 to 282 (PDHSDKQSVQGLHPPSPGKA) form a disordered region. A helical transmembrane segment spans residues 287-307 (TIIALLFLGAIVYDLAVVGTV). Residues 308 to 326 (DVMPLFVLREPLSWNQVQV) are Extracellular-facing. A helical transmembrane segment spans residues 327 to 347 (GYGMAAGYTIFITSFLGVLVF). Residues 348 to 353 (SRCFQD) are Cytoplasmic-facing. A helical transmembrane segment spans residues 354–374 (TTMIMIGMVSFGSGALLLAFV). Topologically, residues 375–376 (KE) are extracellular. The helical transmembrane segment at 377 to 397 (TYMFYIARAVMLFALIPITTI) threads the bilayer. Residues 398 to 412 (RSAMSKLIKGSSYGK) lie on the Cytoplasmic side of the membrane. Residues 413 to 433 (VFVILQLSLTLTGVVTSTVYN) form a helical membrane-spanning segment. At 434–446 (KIYQVTMEKFIGT) the chain is on the extracellular side. Residues 447-467 (CFALSSFLSFLAIIPIGIVAY) traverse the membrane as a helical segment. The Cytoplasmic segment spans residues 468–481 (KQASWLQYGDVRET).

This sequence belongs to the major facilitator superfamily. SLC46A family. In terms of processing, glycosylated. Highly expressed by the epididymal duct epithelium.

It localises to the endosome membrane. The protein localises to the cell membrane. It carries out the reaction N-acetyl-beta-D-glucosaminyl-(1-&gt;4)-1,6-anhydro-N-acetyl-beta-D-muramoyl-L-alanyl-gamma-D-glutamyl-meso-2,6-diaminopimeloyl-D-alanine(out) + n H(+)(out) = N-acetyl-beta-D-glucosaminyl-(1-&gt;4)-1,6-anhydro-N-acetyl-beta-D-muramoyl-L-alanyl-gamma-D-glutamyl-meso-2,6-diaminopimeloyl-D-alanine(in) + n H(+)(in). It catalyses the reaction L-alanyl-gamma-D-glutamyl-meso-2,6-diaminopimelate(out) + n H(+)(out) = L-alanyl-gamma-D-glutamyl-meso-2,6-diaminopimelate(in) + n H(+)(in). The catalysed reaction is N-acetyl-D-muramoyl-L-alanyl-D-isoglutamine(out) + n H(+)(out) = N-acetyl-D-muramoyl-L-alanyl-D-isoglutamine(in) + n H(+)(in). The enzyme catalyses 2',3'-cGAMP(out) + n H(+)(out) = 2',3'-cGAMP(in) + n H(+)(in). It carries out the reaction 3',3'-cGAMP(out) + n H(+)(out) = 3',3'-cGAMP(in) + n H(+)(in). Functionally, proton-coupled transporter that delivers pathogen-associated or danger-associated molecular patterns to cytosolic pattern recognition receptors as part of the innate immune response to microbes or tissue injury. Has selectivity toward muropeptides that contain the amino acid diaminopimelic acid (DAP-type peptidoglycan muropeptides) including Tri-DAP and tracheal toxin (TCT), common in Gram-negative bacteria and Gram-positive bacilli. In the context of immune recognition of skin microbiota, shuttles bacterial muropeptides across the endolysosomal membranes into the cytosol for recognition by NOD1, triggering MYD88-dependent secretion of IL1A and neutrophil recruitment in a pyroptosis-type inflammatory process. To a lesser extent and redundantly, transports muramyl dipeptides derived from most bacterial proteoglycans, eliciting NOD2 receptor activation and downstream inflammatory responses. Postulated to function as an importer of cyclic GMP-AMP dinucleotides (cGAMPs) in monocyte and macrophage cell lineages. Selectively imports cGAMPs derived from pathogenic bacteria such as 3'3'-cGAMP thus providing for differential immune recognition of pathogenic versus commensal bacteria. During tumorigenesis may transport extracellular tumor-derived 2'3'-cGAMP across the plasma membrane of M1-polarized macrophages to activate the anti-tumoral stimulator of interferon genes (STING) pathway. The transport mechanism, its electrogenicity and stoichiometry remain to be elucidated. The polypeptide is Solute carrier family 46 member 2 (Canis lupus familiaris (Dog)).